A 378-amino-acid polypeptide reads, in one-letter code: C-C chemokine receptor type 7 (378 aa).

A signal peptide spans 1-24; that stretch reads MDLGKPMKSVLVVALLVIFQVCLC. The Extracellular segment spans residues 25–59; it reads QDEVTDDYIGDNTTVDYTLFESLCSKKDVRNFKAW. N-linked (GlcNAc...) asparagine glycosylation occurs at Asn36. A helical membrane pass occupies residues 60-86; the sequence is FLPIMYSIICFVGLLGNGLVVLTYIYF. At 87-95 the chain is on the cytoplasmic side; it reads KRLKTMTDT. The chain crosses the membrane as a helical span at residues 96–116; the sequence is YLLNLAVADILFLLTLPFWAY. The Extracellular portion of the chain corresponds to 117–130; the sequence is SAAKSWVFGVHFCK. The cysteines at positions 129 and 210 are disulfide-linked. Residues 131–152 traverse the membrane as a helical segment; it reads LIFAIYKMSFFSGMLLLLCISI. At 153-170 the chain is on the cytoplasmic side; the sequence is DRYVAIVQAVSAHRHRAR. Residues 171 to 191 traverse the membrane as a helical segment; it reads VLLISKLSCVGIWILATVLSI. The Extracellular segment spans residues 192-219; that stretch reads PELLYSDLQRSSSEQAMRCSLITEHVEA. Residues 220–247 form a helical membrane-spanning segment; the sequence is FITIQVAQMVIGFLVPLLAMSFCYLVII. Residues 248–263 lie on the Cytoplasmic side of the membrane; sequence RTLLQARNFERNKAIK. The helical transmembrane segment at 264 to 289 threads the bilayer; sequence VIIAVVVVFIVFQLPYNGVVLAQTVA. The Extracellular segment spans residues 290 to 313; it reads NFNITSSTCELSKQLNIAYDVTYS. A helical membrane pass occupies residues 314–331; the sequence is LACVRCCVNPFLYAFIGV. At 332–378 the chain is on the cytoplasmic side; it reads KFRNDLFKLFKDLGCLSQEQLRQWSSCRHIRRSSMSVEAETTTTFSP.

The protein belongs to the G-protein coupled receptor 1 family. In terms of tissue distribution, expressed in various lymphoid tissues and activated B- and T-lymphocytes, strongly up-regulated in B-cells infected with Epstein-Barr virus and T-cells infected with herpesvirus 6 or 7.

It localises to the cell membrane. Functionally, receptor for the MIP-3-beta chemokine. Probable mediator of EBV effects on B-lymphocytes or of normal lymphocyte functions. The chain is C-C chemokine receptor type 7 (CCR7) from Homo sapiens (Human).